A 333-amino-acid chain; its full sequence is Pro-cathepsin H (333 aa).

An N-terminal signal peptide occupies residues 1-20 (MWAALPLLCAGAWLLSTGAT). Residues 21–95 (AELTVNAIEK…AEIKHKFLWS (75 aa)) constitute a propeptide, activation peptide. N-linked (GlcNAc...) asparagine glycans are attached at residues asparagine 70 and asparagine 99. 4 disulfide bridges follow: cysteine 100–cysteine 325, cysteine 136–cysteine 179, cysteine 170–cysteine 212, and cysteine 270–cysteine 320. A propeptide spanning residues 104-113 (KSNYLRGTGP) is cleaved from the precursor. The active site involves cysteine 139. An N-linked (GlcNAc...) asparagine glycan is attached at asparagine 228. Catalysis depends on residues histidine 279 and asparagine 299.

This sequence belongs to the peptidase C1 family. In terms of assembly, composed of a mini chain and a large chain. The large chain may be split into heavy and light chain. All chains are held together by disulfide bonds. In terms of tissue distribution, widely expressed with highest expression found in non-skeletal tissues. Low levels found in skeletal tissue.

It is found in the lysosome. The catalysed reaction is Hydrolysis of proteins, acting as an aminopeptidase (notably, cleaving Arg-|-Xaa bonds) as well as an endopeptidase.. Its function is as follows. Important for the overall degradation of proteins in lysosomes. This is Pro-cathepsin H (Ctsh) from Mus musculus (Mouse).